We begin with the raw amino-acid sequence, 62 residues long: Photosystem II reaction center protein Z (62 aa).

Helical transmembrane passes span 8-28 (AVFALIATSSILLIGVPVVFA) and 41-61 (FSGTSLWIGLVFLVGILNSLI).

Belongs to the PsbZ family. PSII is composed of 1 copy each of membrane proteins PsbA, PsbB, PsbC, PsbD, PsbE, PsbF, PsbH, PsbI, PsbJ, PsbK, PsbL, PsbM, PsbT, PsbY, PsbZ, Psb30/Ycf12, at least 3 peripheral proteins of the oxygen-evolving complex and a large number of cofactors. It forms dimeric complexes.

It localises to the plastid. The protein localises to the chloroplast thylakoid membrane. Functionally, may control the interaction of photosystem II (PSII) cores with the light-harvesting antenna, regulates electron flow through the 2 photosystem reaction centers. PSII is a light-driven water plastoquinone oxidoreductase, using light energy to abstract electrons from H(2)O, generating a proton gradient subsequently used for ATP formation. In Daucus carota (Wild carrot), this protein is Photosystem II reaction center protein Z.